A 466-amino-acid chain; its full sequence is Serine/threonine-protein kinase SSN3 (466 aa).

A Protein kinase domain is found at 32–396 (YKILGFISSG…ARDALRHPWF (365 aa)). ATP is bound at residue 38–46 (ISSGTYGRV). Residues 58–105 (ASAKSALPSSTRAALSLPKDKLPSPSFTEDSDPLNNPEMCMRPGDRPA) are disordered. Lysine 114 contacts ATP. Catalysis depends on aspartate 216, which acts as the Proton acceptor. The tract at residues 421 to 466 (THEDNGDAKMGSLPQSMAGGRLPSSSNFRPASGNIVQPAARKKARI) is disordered.

The protein belongs to the protein kinase superfamily. CMGC Ser/Thr protein kinase family. CDC2/CDKX subfamily. In terms of assembly, component of the SRB8-11 complex, a regulatory module of the Mediator complex. Mg(2+) serves as cofactor.

The protein resides in the nucleus. The enzyme catalyses L-seryl-[protein] + ATP = O-phospho-L-seryl-[protein] + ADP + H(+). It carries out the reaction L-threonyl-[protein] + ATP = O-phospho-L-threonyl-[protein] + ADP + H(+). The catalysed reaction is [DNA-directed RNA polymerase] + ATP = phospho-[DNA-directed RNA polymerase] + ADP + H(+). Component of the SRB8-11 complex. The SRB8-11 complex is a regulatory module of the Mediator complex which is itself involved in regulation of basal and activated RNA polymerase II-dependent transcription. The SRB8-11 complex may be involved in the transcriptional repression of a subset of genes regulated by Mediator. It may inhibit the association of the Mediator complex with RNA polymerase II to form the holoenzyme complex. The SRB8-11 complex phosphorylates the C-terminal domain (CTD) of the largest subunit of RNA polymerase II. This chain is Serine/threonine-protein kinase SSN3 (SSN3), found in Cryptococcus neoformans var. neoformans serotype D (strain B-3501A) (Filobasidiella neoformans).